We begin with the raw amino-acid sequence, 157 residues long: Probable Brix domain-containing ribosomal biogenesis protein (157 aa).

The region spanning 1–157 (MLVTSSRKPS…KLNLRGFKKY (157 aa)) is the Brix domain.

In terms of biological role, probably involved in the biogenesis of the ribosome. In Methanosarcina barkeri (strain Fusaro / DSM 804), this protein is Probable Brix domain-containing ribosomal biogenesis protein.